Here is a 670-residue protein sequence, read N- to C-terminus: UvrABC system protein B (670 aa).

The Helicase ATP-binding domain occupies 26 to 183 (EGLENGLAHQ…RRLSELQYSR (158 aa)). 39-46 (GVTGSGKT) lines the ATP pocket. The Beta-hairpin motif lies at 92–115 (YYDYYQPEAYVPSSDTFIEKDASV). In terms of domain architecture, Helicase C-terminal spans 431-597 (QVDDLLSEIR…GLNKKIGDIL (167 aa)). The segment at 600-620 (GQPSTRGKGKGRGGKVADTNN) is disordered. The 36-residue stretch at 630–665 (DQKIRELEAKMYTHAQNLEFEQAAELRDQVHQLRQQ) folds into the UVR domain.

It belongs to the UvrB family. As to quaternary structure, forms a heterotetramer with UvrA during the search for lesions. Interacts with UvrC in an incision complex.

It localises to the cytoplasm. In terms of biological role, the UvrABC repair system catalyzes the recognition and processing of DNA lesions. A damage recognition complex composed of 2 UvrA and 2 UvrB subunits scans DNA for abnormalities. Upon binding of the UvrA(2)B(2) complex to a putative damaged site, the DNA wraps around one UvrB monomer. DNA wrap is dependent on ATP binding by UvrB and probably causes local melting of the DNA helix, facilitating insertion of UvrB beta-hairpin between the DNA strands. Then UvrB probes one DNA strand for the presence of a lesion. If a lesion is found the UvrA subunits dissociate and the UvrB-DNA preincision complex is formed. This complex is subsequently bound by UvrC and the second UvrB is released. If no lesion is found, the DNA wraps around the other UvrB subunit that will check the other stand for damage. This chain is UvrABC system protein B, found in Yersinia enterocolitica serotype O:8 / biotype 1B (strain NCTC 13174 / 8081).